A 277-amino-acid chain; its full sequence is Formamidopyrimidine-DNA glycosylase (277 aa).

Residue Pro-2 is the Schiff-base intermediate with DNA of the active site. Glu-3 serves as the catalytic Proton donor. The Proton donor; for beta-elimination activity role is filled by Lys-58. Residues His-95, Arg-113, and Arg-158 each coordinate DNA. The FPG-type zinc-finger motif lies at 243–277 (GVYDRANQPCLRCGGVVRQIRQAGRSTYYCTGCQH). Arg-267 functions as the Proton donor; for delta-elimination activity in the catalytic mechanism.

Belongs to the FPG family. In terms of assembly, monomer. Requires Zn(2+) as cofactor.

The catalysed reaction is Hydrolysis of DNA containing ring-opened 7-methylguanine residues, releasing 2,6-diamino-4-hydroxy-5-(N-methyl)formamidopyrimidine.. The enzyme catalyses 2'-deoxyribonucleotide-(2'-deoxyribose 5'-phosphate)-2'-deoxyribonucleotide-DNA = a 3'-end 2'-deoxyribonucleotide-(2,3-dehydro-2,3-deoxyribose 5'-phosphate)-DNA + a 5'-end 5'-phospho-2'-deoxyribonucleoside-DNA + H(+). In terms of biological role, involved in base excision repair of DNA damaged by oxidation or by mutagenic agents. Acts as a DNA glycosylase that recognizes and removes damaged bases. Has a preference for oxidized purines, such as 7,8-dihydro-8-oxoguanine (8-oxoG). Has AP (apurinic/apyrimidinic) lyase activity and introduces nicks in the DNA strand. Cleaves the DNA backbone by beta-delta elimination to generate a single-strand break at the site of the removed base with both 3'- and 5'-phosphates. The chain is Formamidopyrimidine-DNA glycosylase from Dechloromonas aromatica (strain RCB).